Reading from the N-terminus, the 634-residue chain is Chaperone protein dnaK2 (634 aa).

T197 carries the phosphothreonine; by autocatalysis modification. Positions 601 to 623 (GAAAAESGADAGAAGAGDSSSGD) are enriched in low complexity. Residues 601–634 (GAAAAESGADAGAAGAGDSSSGDDVIDAEFTESK) are disordered. Over residues 624-634 (DVIDAEFTESK) the composition is skewed to acidic residues.

Belongs to the heat shock protein 70 family.

Acts as a chaperone. This Prochlorococcus marinus (strain MIT 9313) protein is Chaperone protein dnaK2 (dnaK2).